A 331-amino-acid polypeptide reads, in one-letter code: Reticulocalbin-1 (331 aa).

Residues 1-29 (MARGGRGRRLGLALGLLLALVLAPRVLRA) form the signal peptide. Residue Asn53 is glycosylated (N-linked (GlcNAc...) asparagine). Ser55 is subject to Phosphoserine. Position 76 is a phosphothreonine (Thr76). EF-hand domains lie at 79–114 (ESKE…VQKR), 115–150 (YIFD…YYLG), 166–201 (KMLP…EEFE), 203–238 (MKEI…HEEN), 244–279 (WVLS…QDYD), and 280–315 (HAQA…FVGS). Ser80 carries the phosphoserine; by FAM20C modification. Positions 92, 94, 96, 103, 128, 130, 132, 134, 139, 179, 181, 183, 185, 190, 216, 218, 220, 227, 257, 259, 261, 263, 268, 293, 295, 297, 299, and 304 each coordinate Ca(2+). The Prevents secretion from ER motif lies at 328 to 331 (HDEL).

The protein belongs to the CREC family. In terms of processing, O-glycosylated. O-mannosylated by POMT1 and POMT2 and elongated by POMGNT1.

The protein resides in the endoplasmic reticulum lumen. Functionally, may regulate calcium-dependent activities in the endoplasmic reticulum lumen or post-ER compartment. The protein is Reticulocalbin-1 (RCN1) of Homo sapiens (Human).